The primary structure comprises 265 residues: Eukaryotic translation initiation factor 3 subunit J (265 aa).

The tract at residues 1-71 (MSWDDEAING…KESSADRALL (71 aa)) is disordered. Over residues 23–32 (WDAEIGDDEP) the composition is skewed to acidic residues. A compositionally biased stretch (basic and acidic residues) spans 42-71 (EEKKPAPKPKKEQPKKVKKGKESSADRALL). S65 is modified (phosphoserine). A Phosphothreonine modification is found at T75. A Phosphoserine modification is found at S92. Positions 219–265 (VRGGTATGGAGKKKVKGKTNLGGAFKKDQDFDLDGPDDFEFGDDDFM) are disordered. R220 is modified (omega-N-methylarginine). Acidic residues predominate over residues 249–265 (FDLDGPDDFEFGDDDFM).

Belongs to the eIF-3 subunit J family. In terms of assembly, probable component of the eukaryotic translation initiation factor 3 (eIF-3) complex. Is not part of the eIF-3 core complex, with which it is associated in substochiometric amounts.

Its subcellular location is the cytoplasm. Functionally, component of the eukaryotic translation initiation factor 3 (eIF-3) complex, which is involved in protein synthesis of a specialized repertoire of mRNAs and, together with other initiation factors, stimulates binding of mRNA and methionyl-tRNAi to the 40S ribosome. The eIF-3 complex specifically targets and initiates translation of a subset of mRNAs involved in cell proliferation. The polypeptide is Eukaryotic translation initiation factor 3 subunit J (Saccharomyces cerevisiae (strain ATCC 204508 / S288c) (Baker's yeast)).